The sequence spans 943 residues: Translation initiation factor IF-2 (943 aa).

Positions 29-357 (LSVKSHSSSV…KPVTERKFHE (329 aa)) are disordered. Basic and acidic residues-rich tracts occupy residues 69 to 82 (PKEEKVEPKVDKAS), 112 to 137 (FKAEREARAKAEAERRKNGGGRDNRN), 145 to 155 (QGKRHNNDRRN), 163 to 196 (DHNKGNRDNSTNHDRNFQGKLRNDQNQNNRRDNA), and 224 to 253 (RQSETRFREEKAAEQRRAKEQEKARKEKQQ). Over residues 254–266 (AEVAVQKAAAETK) the composition is skewed to low complexity. Over residues 296–309 (KSRDNRRVNEDGPK) the composition is skewed to basic and acidic residues. The span at 313–332 (NNKWNNQNQVRNQRNSNWNK) shows a compositional bias: low complexity. The region spanning 445-614 (ERAPVVTIMG…LLVAEVEELK (170 aa)) is the tr-type G domain. Residues 454–461 (GHVDHGKT) are G1. 454-461 (GHVDHGKT) serves as a coordination point for GTP. The interval 479-483 (GITQH) is G2. Residues 500–503 (DTPG) form a G3 region. Residues 500 to 504 (DTPGH) and 554 to 557 (NKID) each bind GTP. The interval 554-557 (NKID) is G4. The interval 590 to 592 (SAK) is G5.

This sequence belongs to the TRAFAC class translation factor GTPase superfamily. Classic translation factor GTPase family. IF-2 subfamily.

It is found in the cytoplasm. Functionally, one of the essential components for the initiation of protein synthesis. Protects formylmethionyl-tRNA from spontaneous hydrolysis and promotes its binding to the 30S ribosomal subunits. Also involved in the hydrolysis of GTP during the formation of the 70S ribosomal complex. The protein is Translation initiation factor IF-2 of Streptococcus thermophilus (strain CNRZ 1066).